We begin with the raw amino-acid sequence, 296 residues long: tRNA dimethylallyltransferase (296 aa).

9–16 (GPTAVGKT) is a binding site for ATP. Residue 11–16 (TAVGKT) participates in substrate binding. Positions 34–37 (DSRQ) are interaction with substrate tRNA.

Belongs to the IPP transferase family. As to quaternary structure, monomer. Mg(2+) serves as cofactor.

The catalysed reaction is adenosine(37) in tRNA + dimethylallyl diphosphate = N(6)-dimethylallyladenosine(37) in tRNA + diphosphate. Functionally, catalyzes the transfer of a dimethylallyl group onto the adenine at position 37 in tRNAs that read codons beginning with uridine, leading to the formation of N6-(dimethylallyl)adenosine (i(6)A). This chain is tRNA dimethylallyltransferase, found in Chloroflexus aggregans (strain MD-66 / DSM 9485).